The chain runs to 200 residues: Small ribosomal subunit protein uS4 (200 aa).

The tract at residues 21 to 42 (GTGKELQKRPYPPGQHGPGQRR) is disordered. Positions 92–155 (SRLDNLVYRL…RNLQVIKEAI (64 aa)) constitute an S4 RNA-binding domain.

Belongs to the universal ribosomal protein uS4 family. In terms of assembly, part of the 30S ribosomal subunit. Contacts protein S5. The interaction surface between S4 and S5 is involved in control of translational fidelity.

In terms of biological role, one of the primary rRNA binding proteins, it binds directly to 16S rRNA where it nucleates assembly of the body of the 30S subunit. With S5 and S12 plays an important role in translational accuracy. This chain is Small ribosomal subunit protein uS4, found in Geobacillus thermodenitrificans (strain NG80-2).